The sequence spans 185 residues: UPF0397 protein LJ_1703 (185 aa).

5 consecutive transmembrane segments (helical) span residues 6–26 (GLSVKSVVAIGIGAAIYVILA), 46–66 (FLALLATIYGPVVGFSVGFIG), 78–98 (TWWSWVLATAVLGLIIGLYGM), 113–133 (IGFNIVQIIANVVSWLIIAPV), and 147–167 (FLQGATATITNSISILILGTI).

This sequence belongs to the UPF0397 family.

The protein resides in the cell membrane. The chain is UPF0397 protein LJ_1703 from Lactobacillus johnsonii (strain CNCM I-12250 / La1 / NCC 533).